Consider the following 577-residue polypeptide: Copine-8 (577 aa).

C2 domains follow at residues 19 to 146 (TSAT…RLEK) and 155 to 278 (KCGT…FNVY). Residues Asp-52, Asp-58, Asp-112, Asp-114, Ser-117, Lys-122, Asp-124, Asp-186, Asp-192, Asp-248, Asp-250, and Asp-256 each contribute to the Ca(2+) site. Phosphoserine is present on Ser-273. The VWFA domain maps to 322–523 (NFTVAIDFTA…VQFVPFRDYI (202 aa)).

This sequence belongs to the copine family. Requires Ca(2+) as cofactor.

Probable calcium-dependent phospholipid-binding protein that may play a role in calcium-mediated intracellular processes. The protein is Copine-8 of Mus musculus (Mouse).